The chain runs to 343 residues: Protein RecA (343 aa).

66–73 (GPESSGKT) serves as a coordination point for ATP.

Belongs to the RecA family.

Its subcellular location is the cytoplasm. Can catalyze the hydrolysis of ATP in the presence of single-stranded DNA, the ATP-dependent uptake of single-stranded DNA by duplex DNA, and the ATP-dependent hybridization of homologous single-stranded DNAs. It interacts with LexA causing its activation and leading to its autocatalytic cleavage. The polypeptide is Protein RecA (Rickettsia conorii (strain ATCC VR-613 / Malish 7)).